Here is a 272-residue protein sequence, read N- to C-terminus: ATP phosphoribosyltransferase regulatory subunit (272 aa).

It belongs to the class-II aminoacyl-tRNA synthetase family. HisZ subfamily. As to quaternary structure, heteromultimer composed of HisG and HisZ subunits.

Its subcellular location is the cytoplasm. The protein operates within amino-acid biosynthesis; L-histidine biosynthesis; L-histidine from 5-phospho-alpha-D-ribose 1-diphosphate: step 1/9. Its function is as follows. Required for the first step of histidine biosynthesis. May allow the feedback regulation of ATP phosphoribosyltransferase activity by histidine. The chain is ATP phosphoribosyltransferase regulatory subunit from Staphylococcus aureus (strain Mu3 / ATCC 700698).